The chain runs to 245 residues: Sugar fermentation stimulation protein homolog (245 aa).

The protein belongs to the SfsA family.

This is Sugar fermentation stimulation protein homolog from Yersinia pseudotuberculosis serotype I (strain IP32953).